The following is a 264-amino-acid chain: Thymidylate synthase (264 aa).

DUMP is bound at residue R21. A (6R)-5,10-methylene-5,6,7,8-tetrahydrofolate-binding site is contributed by H51. 126–127 provides a ligand contact to dUMP; sequence RR. The active-site Nucleophile is the C146. DUMP-binding positions include 166–169, N177, and 207–209; these read RSAD and HIY. D169 is a (6R)-5,10-methylene-5,6,7,8-tetrahydrofolate binding site. A263 lines the (6R)-5,10-methylene-5,6,7,8-tetrahydrofolate pocket.

The protein belongs to the thymidylate synthase family. Bacterial-type ThyA subfamily. In terms of assembly, homodimer.

The protein localises to the cytoplasm. The catalysed reaction is dUMP + (6R)-5,10-methylene-5,6,7,8-tetrahydrofolate = 7,8-dihydrofolate + dTMP. It participates in pyrimidine metabolism; dTTP biosynthesis. Catalyzes the reductive methylation of 2'-deoxyuridine-5'-monophosphate (dUMP) to 2'-deoxythymidine-5'-monophosphate (dTMP) while utilizing 5,10-methylenetetrahydrofolate (mTHF) as the methyl donor and reductant in the reaction, yielding dihydrofolate (DHF) as a by-product. This enzymatic reaction provides an intracellular de novo source of dTMP, an essential precursor for DNA biosynthesis. The chain is Thymidylate synthase from Bacteroides thetaiotaomicron (strain ATCC 29148 / DSM 2079 / JCM 5827 / CCUG 10774 / NCTC 10582 / VPI-5482 / E50).